Here is a 183-residue protein sequence, read N- to C-terminus: Ribosome maturation factor RimM (183 aa).

A PRC barrel domain is found at 102–183 (DDDFYWHQLE…CITVDWDPEF (82 aa)).

It belongs to the RimM family. As to quaternary structure, binds ribosomal protein uS19.

The protein localises to the cytoplasm. Its function is as follows. An accessory protein needed during the final step in the assembly of 30S ribosomal subunit, possibly for assembly of the head region. Essential for efficient processing of 16S rRNA. May be needed both before and after RbfA during the maturation of 16S rRNA. It has affinity for free ribosomal 30S subunits but not for 70S ribosomes. The chain is Ribosome maturation factor RimM from Saccharophagus degradans (strain 2-40 / ATCC 43961 / DSM 17024).